The following is a 509-amino-acid chain: 2,3-bisphosphoglycerate-independent phosphoglycerate mutase (509 aa).

Residue aspartate 11 participates in Mn(2+) binding. A Phosphotyrosine modification is found at tyrosine 35. Mn(2+) is bound at residue serine 61. The active-site Phosphoserine intermediate is serine 61. Residues histidine 122, 152–153, arginine 184, arginine 190, 260–263, and lysine 335 contribute to the substrate site; these read RD and RPDR. Mn(2+) is bound by residues aspartate 402, histidine 406, aspartate 443, histidine 444, and histidine 461.

Belongs to the BPG-independent phosphoglycerate mutase family. Monomer. Mn(2+) serves as cofactor.

The catalysed reaction is (2R)-2-phosphoglycerate = (2R)-3-phosphoglycerate. Its pathway is carbohydrate degradation; glycolysis; pyruvate from D-glyceraldehyde 3-phosphate: step 3/5. In terms of biological role, essential for rapid growth and for sporulation. Catalyzes the interconversion of 2-phosphoglycerate and 3-phosphoglycerate. The protein is 2,3-bisphosphoglycerate-independent phosphoglycerate mutase of Bacillus thuringiensis (strain Al Hakam).